A 380-amino-acid polypeptide reads, in one-letter code: Queuine tRNA-ribosyltransferase (380 aa).

The active-site Proton acceptor is Asp-93. Residues 93 to 97, Asp-147, Gln-198, and Gly-225 each bind substrate; that span reads DSGGF. Residues 256 to 262 are RNA binding; that stretch reads GVGLPSN. Asp-275 (nucleophile) is an active-site residue. The interval 280-284 is RNA binding; important for wobble base 34 recognition; the sequence is ARNGR. Zn(2+) is bound by residues Cys-313, Cys-315, Cys-318, and His-344.

It belongs to the queuine tRNA-ribosyltransferase family. As to quaternary structure, homodimer. Within each dimer, one monomer is responsible for RNA recognition and catalysis, while the other monomer binds to the replacement base PreQ1. Zn(2+) is required as a cofactor.

It catalyses the reaction 7-aminomethyl-7-carbaguanine + guanosine(34) in tRNA = 7-aminomethyl-7-carbaguanosine(34) in tRNA + guanine. It functions in the pathway tRNA modification; tRNA-queuosine biosynthesis. Its function is as follows. Catalyzes the base-exchange of a guanine (G) residue with the queuine precursor 7-aminomethyl-7-deazaguanine (PreQ1) at position 34 (anticodon wobble position) in tRNAs with GU(N) anticodons (tRNA-Asp, -Asn, -His and -Tyr). Catalysis occurs through a double-displacement mechanism. The nucleophile active site attacks the C1' of nucleotide 34 to detach the guanine base from the RNA, forming a covalent enzyme-RNA intermediate. The proton acceptor active site deprotonates the incoming PreQ1, allowing a nucleophilic attack on the C1' of the ribose to form the product. After dissociation, two additional enzymatic reactions on the tRNA convert PreQ1 to queuine (Q), resulting in the hypermodified nucleoside queuosine (7-(((4,5-cis-dihydroxy-2-cyclopenten-1-yl)amino)methyl)-7-deazaguanosine). This is Queuine tRNA-ribosyltransferase from Clostridium perfringens (strain ATCC 13124 / DSM 756 / JCM 1290 / NCIMB 6125 / NCTC 8237 / Type A).